Reading from the N-terminus, the 850-residue chain is DNA mismatch repair protein MutS (850 aa).

608-615 (GPNMGGKS) lines the ATP pocket.

The protein belongs to the DNA mismatch repair MutS family.

This protein is involved in the repair of mismatches in DNA. It is possible that it carries out the mismatch recognition step. This protein has a weak ATPase activity. This Thiobacillus denitrificans (strain ATCC 25259 / T1) protein is DNA mismatch repair protein MutS.